Reading from the N-terminus, the 307-residue chain is GTPase Era (307 aa).

The Era-type G domain occupies 17–186; sequence RCGFVAIVGR…LELLKPYLPE (170 aa). Residues 25-32 form a G1 region; it reads GRPNVGKS. A GTP-binding site is contributed by 25–32; sequence GRPNVGKS. Residues 51–55 form a G2 region; that stretch reads QTTRN. The tract at residues 72 to 75 is G3; that stretch reads DTPG. GTP contacts are provided by residues 72-76 and 133-136; these read DTPGF and NKID. Residues 133–136 form a G4 region; the sequence is NKID. The tract at residues 165–167 is G5; it reads VSA. The KH type-2 domain maps to 217–293; sequence LGEELPYAMN…FLKVWVKVKS (77 aa).

Belongs to the TRAFAC class TrmE-Era-EngA-EngB-Septin-like GTPase superfamily. Era GTPase family. As to quaternary structure, monomer.

The protein resides in the cytoplasm. The protein localises to the cell inner membrane. In terms of biological role, an essential GTPase that binds both GDP and GTP, with rapid nucleotide exchange. Plays a role in 16S rRNA processing and 30S ribosomal subunit biogenesis and possibly also in cell cycle regulation and energy metabolism. The sequence is that of GTPase Era from Neisseria meningitidis serogroup C / serotype 2a (strain ATCC 700532 / DSM 15464 / FAM18).